The primary structure comprises 133 residues: Fatty acid-binding protein (133 aa).

The protein belongs to the calycin superfamily. Fatty-acid binding protein (FABP) family.

The protein is Fatty acid-binding protein of Clonorchis sinensis (Chinese liver fluke).